The chain runs to 155 residues: SsrA-binding protein (155 aa).

The tract at residues 136-155 (REDLKRRQDQRDIQRAMKSY) is disordered.

Belongs to the SmpB family.

The protein localises to the cytoplasm. Its function is as follows. Required for rescue of stalled ribosomes mediated by trans-translation. Binds to transfer-messenger RNA (tmRNA), required for stable association of tmRNA with ribosomes. tmRNA and SmpB together mimic tRNA shape, replacing the anticodon stem-loop with SmpB. tmRNA is encoded by the ssrA gene; the 2 termini fold to resemble tRNA(Ala) and it encodes a 'tag peptide', a short internal open reading frame. During trans-translation Ala-aminoacylated tmRNA acts like a tRNA, entering the A-site of stalled ribosomes, displacing the stalled mRNA. The ribosome then switches to translate the ORF on the tmRNA; the nascent peptide is terminated with the 'tag peptide' encoded by the tmRNA and targeted for degradation. The ribosome is freed to recommence translation, which seems to be the essential function of trans-translation. The chain is SsrA-binding protein from Nostoc punctiforme (strain ATCC 29133 / PCC 73102).